The chain runs to 177 residues: 2''-aminoglycoside nucleotidyltransferase (177 aa).

The Mg(2+) site is built by aspartate 44, aspartate 46, and aspartate 86. Aspartate 86 acts as the Proton acceptor in catalysis.

The cofactor is Mg(2+).

It carries out the reaction nucleoside triphosphate + gentamicin = diphosphate + 2''-nucleotidylgentamicin.. Its function is as follows. Mediates bacterial resistance to kanamycin, gentamicin, dibekacin, sisomicin, neomycin and tobramycin by adenylating the 2''-hydroxyl group of these antibiotics. The protein is 2''-aminoglycoside nucleotidyltransferase (aadB) of Klebsiella pneumoniae.